Consider the following 167-residue polypeptide: uncharacterized protein (167 aa).

The protein to A.aeolicus aq_328.

This is an uncharacterized protein from Aquifex aeolicus (strain VF5).